A 174-amino-acid chain; its full sequence is MTVPKEAEGLIGSHYRAPDYFEVGREKIREFALAVKDDHPAHFDESESAAAGYPDMVAPLTFLAIAGRRVQLEIFTKFSIPINIARVIHRDQKFKFHRPILAHDRLYFDTYLDSVIESHGTVLAEIRSEVTDADGKPIVTSVVTMLGEAAHQEADAAATAAAVASISAGKLGAI.

The region spanning 11 to 131 (IGSHYRAPDY…VLAEIRSEVT (121 aa)) is the MaoC-like domain.

The protein belongs to the UPF0336 family.

The sequence is that of UPF0336 protein MAP_3996c from Mycolicibacterium paratuberculosis (strain ATCC BAA-968 / K-10) (Mycobacterium paratuberculosis).